The primary structure comprises 383 residues: Pheromone-regulated membrane protein 10 (383 aa).

Residues M1–P65 are Cytoplasmic-facing. A helical transmembrane segment spans residues W66–G86. Position 87 (D87) is a topological domain, extracellular. A helical transmembrane segment spans residues W88–L108. The Cytoplasmic portion of the chain corresponds to S109–N117. The chain crosses the membrane as a helical span at residues V118 to P138. Over R139–H141 the chain is Extracellular. Residues I142–L162 form a helical membrane-spanning segment. The Cytoplasmic portion of the chain corresponds to C163–M180. Residues F181–F201 form a helical membrane-spanning segment. The Extracellular segment spans residues G202–Q216. Residues L217 to L237 traverse the membrane as a helical segment. Topologically, residues N238–H241 are cytoplasmic. Residues I242–A262 form a helical membrane-spanning segment. Over G263–E271 the chain is Extracellular. Residues F272–W292 form a helical membrane-spanning segment. K293 is a topological domain (cytoplasmic). The chain crosses the membrane as a helical span at residues G294–S314. At Q315–M352 the chain is on the extracellular side. A helical transmembrane segment spans residues I353 to F373. The Cytoplasmic portion of the chain corresponds to G374 to L383.

It belongs to the ThrE exporter (TC 2.A.79) family.

The protein localises to the membrane. In Saccharomyces cerevisiae (strain ATCC 204508 / S288c) (Baker's yeast), this protein is Pheromone-regulated membrane protein 10 (PRM10).